The following is a 158-amino-acid chain: NAD(P)H-quinone oxidoreductase subunit N, organellar chromatophore (158 aa).

Belongs to the complex I NdhN subunit family. NDH-1 can be composed of about 15 different subunits; different subcomplexes with different compositions have been identified which probably have different functions.

It localises to the plastid. It is found in the organellar chromatophore thylakoid membrane. The enzyme catalyses a plastoquinone + NADH + (n+1) H(+)(in) = a plastoquinol + NAD(+) + n H(+)(out). It carries out the reaction a plastoquinone + NADPH + (n+1) H(+)(in) = a plastoquinol + NADP(+) + n H(+)(out). In terms of biological role, NDH-1 shuttles electrons from an unknown electron donor, via FMN and iron-sulfur (Fe-S) centers, to quinones in the respiratory and/or the photosynthetic chain. The immediate electron acceptor for the enzyme in this species is believed to be plastoquinone. Couples the redox reaction to proton translocation, and thus conserves the redox energy in a proton gradient. This is NAD(P)H-quinone oxidoreductase subunit N, organellar chromatophore from Paulinella chromatophora.